The sequence spans 152 residues: Putative superoxide dismutase [Cu-Zn] (152 aa).

3 residues coordinate Cu cation: His43, His45, and His60. Cys54 and Cys144 are disulfide-bonded. Residues His60, His68, His77, and Asp80 each contribute to the Zn(2+) site. His118 contacts Cu cation.

It belongs to the Cu-Zn superoxide dismutase family. It depends on Cu cation as a cofactor. Zn(2+) serves as cofactor.

It carries out the reaction 2 superoxide + 2 H(+) = H2O2 + O2. Its function is as follows. Destroys radicals which are normally produced within the cells and which are toxic to biological systems. This Orgyia pseudotsugata (Douglas-fir tussock moth) protein is Putative superoxide dismutase [Cu-Zn] (SOD).